The sequence spans 464 residues: MANGKVIQVIGSVVDVEFSADSMPALFNALEIPRENGKMVLEVQSHVGNNRVKCLSFTPTDGLERGAEVIDTTRPLSVPVGRGTLGRIFNVLGEALDNRGDVKSEKTMPIHRLAPGMDELESSAQVLETGIKVIDLIAPFARGGKIGALGGAGVGKTVLIQELIRNIATEHEGFSVFAGVGERSREGNDLWHEMEDSGVLPKTTMVFGQMNELPAVRLRIALTGLTMAEYFRDEERQDVLLFIDNIYRYTLAGMEVSALLGRMPSAVGYQPTLATEMGALQERIASTKQGSITSFQAVYVPADDYTDPGVVATFGHLDAMIALERSLAEQALYPAVDPLASNSRILDPQVVGEEHYKVARDVQKVLQRYKDLQDVIAILGMEELSEEDKLTVARARRIQRFLTQPMFVSEVFTGRPGQYVSLTETIRGFKEILEGKHDSLPEQAFYMVGTIDDAVAEAKKLSAV.

150–157 is a binding site for ATP; sequence GGAGVGKT.

This sequence belongs to the ATPase alpha/beta chains family. As to quaternary structure, F-type ATPases have 2 components, CF(1) - the catalytic core - and CF(0) - the membrane proton channel. CF(1) has five subunits: alpha(3), beta(3), gamma(1), delta(1), epsilon(1). CF(0) has three main subunits: a(1), b(2) and c(9-12). The alpha and beta chains form an alternating ring which encloses part of the gamma chain. CF(1) is attached to CF(0) by a central stalk formed by the gamma and epsilon chains, while a peripheral stalk is formed by the delta and b chains.

The protein resides in the cell membrane. It catalyses the reaction ATP + H2O + 4 H(+)(in) = ADP + phosphate + 5 H(+)(out). In terms of biological role, produces ATP from ADP in the presence of a proton gradient across the membrane. The catalytic sites are hosted primarily by the beta subunits. This Dehalococcoides mccartyi (strain ATCC BAA-2100 / JCM 16839 / KCTC 5957 / BAV1) protein is ATP synthase subunit beta.